Here is a 245-residue protein sequence, read N- to C-terminus: Carboxymethylenebutenolidase homolog (245 aa).

Ala2 bears the N-acetylalanine mark. Catalysis depends on residues Cys132, Asp179, and His212. Ser223 is subject to Phosphoserine.

It belongs to the dienelactone hydrolase family.

The protein resides in the cytoplasm. It localises to the cytosol. In terms of biological role, cysteine hydrolase. In Mus musculus (Mouse), this protein is Carboxymethylenebutenolidase homolog (Cmbl).